We begin with the raw amino-acid sequence, 451 residues long: uncharacterized protein (451 aa).

11 helical membrane passes run 13 to 33 (IGFV…WKFP), 41 to 61 (GGAF…PLLV), 97 to 117 (ACFL…LYIV), 142 to 162 (NPVQ…LVVA), 174 to 194 (AVMM…SLTL), 217 to 237 (ILFA…VMVT), 255 to 275 (IVLM…PAVF), 299 to 319 (LPFG…AALT), 345 to 365 (WTSG…YGVL), 381 to 401 (FTVS…FIPL), and 429 to 449 (LLRF…IGIL).

Belongs to the sodium:neurotransmitter symporter (SNF) (TC 2.A.22) family.

It is found in the cell membrane. In terms of biological role, putative sodium-dependent transporter. This is an uncharacterized protein from Bacillus subtilis (strain 168).